Consider the following 228-residue polypeptide: uncharacterized protein (228 aa).

A signal peptide spans 1-28 (MRKKRVITCVMAASLTLGSLLPAGYASA).

This is an uncharacterized protein from Bacillus subtilis (strain 168).